Reading from the N-terminus, the 462-residue chain is Iroquois-class homeodomain protein irx-1-B (462 aa).

A DNA-binding region (homeobox; TALE-type) is located at residues 121–183; the sequence is DPGRPKNATR…NARRRLKKEN (63 aa). Disordered regions lie at residues 191 to 302, 314 to 339, and 405 to 462; these read GKED…PHSK, SPDGALKSSPPPSQANHTSPQMQHPA, and SLSS…LPSA. Composition is skewed to acidic residues over residues 210 to 220 and 228 to 239; these read EDDEEIDLESI and NDGEQSNEEEDE. Residues 240 to 257 show a composition bias toward basic and acidic residues; the sequence is KLDHFRHGEKVSLKKESE. The span at 410-426 shows a compositional bias: basic and acidic residues; that stretch reads RTPERTSPKHSDRENLP. Positions 446–455 are enriched in polar residues; that stretch reads FSQQEGTSRI.

This sequence belongs to the TALE/IRO homeobox family.

The protein resides in the nucleus. Acts partially redundantly with other irx members in neural patterning. Required for formation of the posterior forebrain, midbrain, hindbrain, and to a lesser extent, spinal cord. Acts early in neural plate development to induce expression of some but not all proneural genes, and specify a neural precursor state. Also up-regulates repressors that prevent neuronal differentiation. Patterns the neuroectoderm in both the anterior/posterior and dorsal/ventral axes. Acts primarily as a transcriptional repressor during neural development, and binds to the bmp4 promoter to repress gene expression and thus mediate down-regulation of bmp4 by wnt signaling. Controls multiple processes through bmp4-repression including neural plate development, neural crest specification and Spemann organizer development. Involved in the specification of the preplacodal field at the anterior border of the neural plate. Regulates the genetic cascade of interactions that are necessary for positioning the isthmus organizer and the formation of the midbrain-hindbrain boundary. Required during at least two stages of pronephros kidney development; during neurula stages, maintains transcription of key renal genes to define the size and identity of the pronephric anlage, probably in part through regulation of bmp-signaling. Subsequently required for proper formation of the intermediate tubule segment of the pronephros. Acts principally as a transcriptional activator during pronephros development. The polypeptide is Iroquois-class homeodomain protein irx-1-B (irx1-b) (Xenopus laevis (African clawed frog)).